The sequence spans 349 residues: Isopentenyl-diphosphate delta-isomerase (349 aa).

Substrate is bound at residue 9 to 10 (RK). Residues 65 to 67 (AMT), S95, and N124 contribute to the FMN site. 95–97 (STH) contributes to the substrate binding site. Residue Q154 coordinates substrate. Residue E155 coordinates Mg(2+). FMN-binding positions include K186, S211, T216, 262 to 264 (GLR), and 283 to 284 (SR).

The protein belongs to the IPP isomerase type 2 family. Homooctamer. Dimer of tetramers. The cofactor is FMN. NADPH is required as a cofactor. It depends on Mg(2+) as a cofactor.

It localises to the cytoplasm. It catalyses the reaction isopentenyl diphosphate = dimethylallyl diphosphate. Functionally, involved in the biosynthesis of isoprenoids. Catalyzes the 1,3-allylic rearrangement of the homoallylic substrate isopentenyl (IPP) to its allylic isomer, dimethylallyl diphosphate (DMAPP). This chain is Isopentenyl-diphosphate delta-isomerase, found in Staphylococcus aureus (strain JH1).